Consider the following 400-residue polypeptide: Tyrosine--tRNA ligase (400 aa).

Residues 42–51 (PTAPDLHLGH) carry the 'HIGH' region motif. The 'KMSKS' region signature appears at 226–230 (KMSKS). Residue Lys-229 participates in ATP binding. The region spanning 339-399 (FSISYILRRA…GKKKIAQIFV (61 aa)) is the S4 RNA-binding domain.

The protein belongs to the class-I aminoacyl-tRNA synthetase family. TyrS type 2 subfamily. As to quaternary structure, homodimer.

The protein resides in the cytoplasm. It carries out the reaction tRNA(Tyr) + L-tyrosine + ATP = L-tyrosyl-tRNA(Tyr) + AMP + diphosphate + H(+). Functionally, catalyzes the attachment of tyrosine to tRNA(Tyr) in a two-step reaction: tyrosine is first activated by ATP to form Tyr-AMP and then transferred to the acceptor end of tRNA(Tyr). This is Tyrosine--tRNA ligase from Hahella chejuensis (strain KCTC 2396).